We begin with the raw amino-acid sequence, 95 residues long: Cell division topological specificity factor (95 aa).

The protein belongs to the MinE family.

Prevents the cell division inhibition by proteins MinC and MinD at internal division sites while permitting inhibition at polar sites. This ensures cell division at the proper site by restricting the formation of a division septum at the midpoint of the long axis of the cell. The chain is Cell division topological specificity factor from Methylorubrum extorquens (strain CM4 / NCIMB 13688) (Methylobacterium extorquens).